A 204-amino-acid chain; its full sequence is Urease accessory protein UreG (204 aa).

Residue 11–18 (GPVGAGKT) coordinates GTP.

Belongs to the SIMIBI class G3E GTPase family. UreG subfamily. In terms of assembly, homodimer. UreD, UreF and UreG form a complex that acts as a GTP-hydrolysis-dependent molecular chaperone, activating the urease apoprotein by helping to assemble the nickel containing metallocenter of UreC. The UreE protein probably delivers the nickel.

It localises to the cytoplasm. Functionally, facilitates the functional incorporation of the urease nickel metallocenter. This process requires GTP hydrolysis, probably effectuated by UreG. This is Urease accessory protein UreG from Staphylococcus aureus (strain Mu3 / ATCC 700698).